A 174-amino-acid chain; its full sequence is Isomerase prhC (174 aa).

The protein belongs to the trt14 isomerase family. As to quaternary structure, homodimer.

It functions in the pathway secondary metabolite biosynthesis; terpenoid biosynthesis. In terms of biological role, isomerase; part of the gene cluster that mediates the biosynthesis of paraherquonin, a meroterpenoid with a unique, highly congested hexacyclic molecular architecture. The first step of the pathway is the synthesis of 3,5-dimethylorsellinic acid (DMOA) by the polyketide synthase prhL. Synthesis of DMOA is followed by farnesylation by the prenyltransferase prhE, methylesterification by the methyl-transferase prhM, epoxidation of the prenyl chain by the flavin-dependent monooxygenase prhF, and cyclization of the farnesyl moiety by the terpene cyclase prhH, to yield the tetracyclic intermediate, protoaustinoid A. The short chain dehydrogenase prhI then oxidizes the C-3 alcohol group of the terpene cyclase product to transform protoaustinoid A into protoaustinoid B. The FAD-binding monooxygenase prhJ catalyzes the oxidation of protoaustinoid B into preaustinoid A which is further oxidized into preaustinoid A1 by FAD-binding monooxygenase phrK. Finally, prhA leads to berkeleydione via the berkeleyone B intermediate. PrhA is a multifunctional dioxygenase that first desaturates at C5-C6 to form berkeleyone B, followed by rearrangement of the A/B-ring to form the cycloheptadiene moiety in berkeleydione. Berkeleydione serves as the key intermediate for the biosynthesis of paraherquonin as well as many other meroterpenoids. The cytochrome P450 monooxygenases prhB, prhD, and prhN, as well as the isomerase prhC, are probably involved in the late stage of paraherquonin biosynthesis, after the production of berkeleydione. Especially prhC might be a multifunctional enzyme that catalyzes the D-ring expansion via intramolecular methoxy rearrangement, as well as the hydrolysis of the expanded D-ring. This is Isomerase prhC from Penicillium brasilianum.